Reading from the N-terminus, the 300-residue chain is Geranylgeranyl pyrophosphate synthase (300 aa).

Met1 bears the N-acetylmethionine mark. The isopentenyl diphosphate site is built by Lys25, Arg28, and His57. Asp64 and Asp68 together coordinate Mg(2+). Residue Arg73 participates in dimethylallyl diphosphate binding. Residue Arg74 coordinates isopentenyl diphosphate. Dimethylallyl diphosphate contacts are provided by Lys151, Thr152, Gln185, Lys202, and Lys212.

This sequence belongs to the FPP/GGPP synthase family. Homohexamer; trimer of homodimers. It depends on Mg(2+) as a cofactor. As to expression, abundantly expressed in testis. Found in other tissues to a lower extent. Expressed in dermal fibroblast and skeletal muscle.

The protein localises to the cytoplasm. It is found in the perinuclear region. The protein resides in the myofibril. Its subcellular location is the sarcomere. It localises to the z line. The catalysed reaction is isopentenyl diphosphate + dimethylallyl diphosphate = (2E)-geranyl diphosphate + diphosphate. The enzyme catalyses isopentenyl diphosphate + (2E)-geranyl diphosphate = (2E,6E)-farnesyl diphosphate + diphosphate. It carries out the reaction isopentenyl diphosphate + (2E,6E)-farnesyl diphosphate = (2E,6E,10E)-geranylgeranyl diphosphate + diphosphate. It functions in the pathway isoprenoid biosynthesis; farnesyl diphosphate biosynthesis; farnesyl diphosphate from geranyl diphosphate and isopentenyl diphosphate: step 1/1. It participates in isoprenoid biosynthesis; geranyl diphosphate biosynthesis; geranyl diphosphate from dimethylallyl diphosphate and isopentenyl diphosphate: step 1/1. Its pathway is isoprenoid biosynthesis; geranylgeranyl diphosphate biosynthesis; geranylgeranyl diphosphate from farnesyl diphosphate and isopentenyl diphosphate: step 1/1. Subject to product inhibition by geranylgeranyl diphosphate. Its function is as follows. Catalyzes the trans-addition of the three molecules of IPP onto DMAPP to form geranylgeranyl pyrophosphate, an important precursor of carotenoids and geranylated proteins. This Homo sapiens (Human) protein is Geranylgeranyl pyrophosphate synthase (GGPS1).